The primary structure comprises 230 residues: Probable caffeoyl-CoA O-methyltransferase 1 (230 aa).

Residues T52, D74, 76–77 (GV), S82, D100, A129, D151, D153, and Y160 each bind S-adenosyl-L-methionine. D151 contributes to the a divalent metal cation binding site. A divalent metal cation-binding residues include D177 and N178.

It belongs to the class I-like SAM-binding methyltransferase superfamily. Cation-dependent O-methyltransferase family. CCoAMT subfamily.

It catalyses the reaction (E)-caffeoyl-CoA + S-adenosyl-L-methionine = (E)-feruloyl-CoA + S-adenosyl-L-homocysteine + H(+). The polypeptide is Probable caffeoyl-CoA O-methyltransferase 1 (omt5) (Dictyostelium discoideum (Social amoeba)).